Consider the following 927-residue polypeptide: Solute carrier family 12 protein B0303.11 (927 aa).

Over 1–23 (MPSSTASSEDAPITSTAWMNWKD) the chain is Cytoplasmic. Residues 24 to 44 (VFLKCVQPMLAVVLLLRFSSI) traverse the membrane as a helical segment. Residues 45–53 (VDEAGFTTT) are Extracellular-facing. A helical membrane pass occupies residues 54 to 74 (IILVFFTFLVSLVTGWSACTV). Topologically, residues 75–95 (VSRKSSEVGFVKTMLAYSSTE) are cytoplasmic. A helical membrane pass occupies residues 96-116 (FAISFSIIYLFCLLVATSTFL). Over 117 to 141 (TSAAEAVLHIFSTFSLELLDGATHD) the chain is Extracellular. Residues 142 to 159 (LRLVSSVLSLITLALCMV) form a helical membrane-spanning segment. Residues 160–165 (RNRNAR) lie on the Cytoplasmic side of the membrane. A helical membrane pass occupies residues 166-186 (FVRTFIFALTCIAIALQLSSV). Over 187–212 (MFRYGEYQLRRVSDRNAMIPSPPNEE) the chain is Extracellular. A helical membrane pass occupies residues 213–233 (ISTIFAQLFPAAMCGLTILNI). The Cytoplasmic segment spans residues 234 to 244 (GSKLQNTAPRG). Residues 245-265 (ALIAIAVSACFYGAAAMLDYV) traverse the membrane as a helical segment. Over 266–284 (EFFARTSTSNSTGSAEYNE) the chain is Extracellular. An N-linked (GlcNAc...) asparagine glycan is attached at N275. Residues 285-305 (FLSYIYTTVPMAIVITLACVL) form a helical membrane-spanning segment. Topologically, residues 306-345 (SAVSTLKYAAVILQSLGRSNQCRCILWLAKGFGERDIPIR) are cytoplasmic. A helical membrane pass occupies residues 346 to 366 (CLLLLSTVQILVSAIGSYDIL). C367 is a topological domain (extracellular). A helical transmembrane segment spans residues 368-388 (IPTTVFYLFAYALFNFYVFLV). The Cytoplasmic portion of the chain corresponds to 389–394 (KLSDPE). A helical transmembrane segment spans residues 395 to 415 (IPSPPTLLSLAISAACFIASL). Over 416 to 419 (YTNR) the chain is Extracellular. The chain crosses the membrane as a helical span at residues 420–440 (HLALFIASIFAISYCSLLYII). The Cytoplasmic portion of the chain corresponds to 441–927 (RRERNEDGEE…SMSALRLKFP (487 aa)).

The protein belongs to the SLC12A transporter family.

The protein localises to the cell membrane. In Caenorhabditis elegans, this protein is Solute carrier family 12 protein B0303.11.